The primary structure comprises 429 residues: Serine hydroxymethyltransferase (429 aa).

Residues Leu130 and 134–136 (GHL) contribute to the (6S)-5,6,7,8-tetrahydrofolate site. The residue at position 239 (Lys239) is an N6-(pyridoxal phosphate)lysine.

The protein belongs to the SHMT family. As to quaternary structure, homodimer. Requires pyridoxal 5'-phosphate as cofactor.

Its subcellular location is the cytoplasm. It catalyses the reaction (6R)-5,10-methylene-5,6,7,8-tetrahydrofolate + glycine + H2O = (6S)-5,6,7,8-tetrahydrofolate + L-serine. The protein operates within one-carbon metabolism; tetrahydrofolate interconversion. It participates in amino-acid biosynthesis; glycine biosynthesis; glycine from L-serine: step 1/1. In terms of biological role, catalyzes the reversible interconversion of serine and glycine with tetrahydrofolate (THF) serving as the one-carbon carrier. This reaction serves as the major source of one-carbon groups required for the biosynthesis of purines, thymidylate, methionine, and other important biomolecules. Also exhibits THF-independent aldolase activity toward beta-hydroxyamino acids, producing glycine and aldehydes, via a retro-aldol mechanism. This Phenylobacterium zucineum (strain HLK1) protein is Serine hydroxymethyltransferase.